The sequence spans 162 residues: uncharacterized protein (162 aa).

Residues 5 to 25 (IIILFLFTAILCSITLCGCIS) traverse the membrane as a helical segment.

It localises to the membrane. This is an uncharacterized protein from Methanocaldococcus jannaschii (strain ATCC 43067 / DSM 2661 / JAL-1 / JCM 10045 / NBRC 100440) (Methanococcus jannaschii).